A 107-amino-acid chain; its full sequence is ADDKNPLEECFREDDYEEFLEIAKNGLEGWYANLGPMRYPVKPSEEGKHDDIFAYEKFDEIVGGMDKKFWEDDGIHGGKETFCYSPMIQKPYQFQHFSEALTAPVGR.

35–38 (GPMR) is a binding site for FAD. Positions 38 and 49 each coordinate substrate.

It belongs to the flavin monoamine oxidase family. FIG1 subfamily. In terms of assembly, homodimer; non-covalently linked. FAD serves as cofactor. In terms of processing, N-glycosylated. Expressed by the venom gland.

It localises to the secreted. The catalysed reaction is an L-alpha-amino acid + O2 + H2O = a 2-oxocarboxylate + H2O2 + NH4(+). It carries out the reaction L-leucine + O2 + H2O = 4-methyl-2-oxopentanoate + H2O2 + NH4(+). It catalyses the reaction L-phenylalanine + O2 + H2O = 3-phenylpyruvate + H2O2 + NH4(+). The enzyme catalyses L-tryptophan + O2 + H2O = indole-3-pyruvate + H2O2 + NH4(+). The catalysed reaction is L-methionine + O2 + H2O = 4-methylsulfanyl-2-oxobutanoate + H2O2 + NH4(+). It carries out the reaction L-isoleucine + O2 + H2O = (S)-3-methyl-2-oxopentanoate + H2O2 + NH4(+). It catalyses the reaction L-arginine + O2 + H2O = 5-guanidino-2-oxopentanoate + H2O2 + NH4(+). The enzyme catalyses L-histidine + O2 + H2O = 3-(imidazol-5-yl)pyruvate + H2O2 + NH4(+). Its function is as follows. Catalyzes an oxidative deamination of predominantly hydrophobic and aromatic L-amino acids, thus producing hydrogen peroxide that may contribute to the diverse toxic effects of this enzyme. Shows high activity on L-Met, moderate activity on L-Trp, L-Leu, L-His, L-Phe, L-Arg, L-Ile, low activity on L-Val, L-Glu, L-Lys, L-Gln, L-Asn, L-Tyr, L-Ala, and no activity on L-Asp, L-Ser, L-Pro, L-Gly, L-Thr and L-Cys. Shows antimicrobial activity inhibiting the growth of both Gram-negative and Gram-positive bacteria. Also inhibits platelet aggregation induced by ADP or collagen. Effects of snake L-amino oxidases on platelets are controversial, since they either induce aggregation or inhibit agonist-induced aggregation. These different effects are probably due to different experimental conditions. This protein may also induce hemorrhage, hemolysis, edema, apoptosis, and have antiparasitic activities. In Macrovipera lebetinus (Levantine viper), this protein is L-amino-acid oxidase.